Here is a 113-residue protein sequence, read N- to C-terminus: Nucleoid-associated protein SYNW0027 (113 aa).

The protein belongs to the YbaB/EbfC family. As to quaternary structure, homodimer.

The protein resides in the cytoplasm. The protein localises to the nucleoid. Binds to DNA and alters its conformation. May be involved in regulation of gene expression, nucleoid organization and DNA protection. This Parasynechococcus marenigrum (strain WH8102) protein is Nucleoid-associated protein SYNW0027.